Reading from the N-terminus, the 144-residue chain is 3-hydroxyacyl-[acyl-carrier-protein] dehydratase FabZ (144 aa).

The active site involves histidine 48.

This sequence belongs to the thioester dehydratase family. FabZ subfamily.

The protein localises to the cytoplasm. It catalyses the reaction a (3R)-hydroxyacyl-[ACP] = a (2E)-enoyl-[ACP] + H2O. In terms of biological role, involved in unsaturated fatty acids biosynthesis. Catalyzes the dehydration of short chain beta-hydroxyacyl-ACPs and long chain saturated and unsaturated beta-hydroxyacyl-ACPs. This chain is 3-hydroxyacyl-[acyl-carrier-protein] dehydratase FabZ, found in Chloroflexus aggregans (strain MD-66 / DSM 9485).